The chain runs to 339 residues: Methylthioribose-1-phosphate isomerase (339 aa).

Substrate-binding positions include 50-52 (RGA), arginine 84, and glutamine 186. Aspartate 227 acts as the Proton donor in catalysis. Position 237 to 238 (237 to 238 (NK)) interacts with substrate.

It belongs to the eIF-2B alpha/beta/delta subunits family. MtnA subfamily.

It carries out the reaction 5-(methylsulfanyl)-alpha-D-ribose 1-phosphate = 5-(methylsulfanyl)-D-ribulose 1-phosphate. Its pathway is amino-acid biosynthesis; L-methionine biosynthesis via salvage pathway; L-methionine from S-methyl-5-thio-alpha-D-ribose 1-phosphate: step 1/6. Catalyzes the interconversion of methylthioribose-1-phosphate (MTR-1-P) into methylthioribulose-1-phosphate (MTRu-1-P). The chain is Methylthioribose-1-phosphate isomerase from Sulfurihydrogenibium sp. (strain YO3AOP1).